We begin with the raw amino-acid sequence, 2564 residues long: Histone-lysine N-methyltransferase SETD2 (2564 aa).

Residues 1–11 show a composition bias toward pro residues; the sequence is MKQLQPQPPPK. A disordered region spans residues 1–30; sequence MKQLQPQPPPKMGDFYDPEHPTPEEEENEA. The span at 17-30 shows a compositional bias: basic and acidic residues; that stretch reads DPEHPTPEEEENEA. The residue at position 131 (serine 131) is a Phosphoserine. Disordered stretches follow at residues 180 to 211, 272 to 561, and 607 to 626; these read STTVDSPPSSPPPPPPPAQATTLSSPAPVTEP, NEQA…TLSK, and PEREKAGSPAPSNRLNDSPT. The span at 187 to 197 shows a compositional bias: pro residues; the sequence is PSSPPPPPPPA. Low complexity predominate over residues 198–207; that stretch reads QATTLSSPAP. Over residues 278–290 the composition is skewed to basic and acidic residues; sequence SSKKEDSHIGKDE. 3 positions are modified to phosphoserine: serine 321, serine 323, and serine 344. 4 stretches are compositionally biased toward basic and acidic residues: residues 335-400, 421-432, 439-467, and 479-528; these read RSHD…ERER, RSERSHYYDSDR, PYRERTRYSRPYTDNRARESSDSEEEYKK, and SYRD…EAIK. Residue lysine 359 forms a Glycyl lysine isopeptide (Lys-Gly) (interchain with G-Cter in SUMO2) linkage. Position 422 is a phosphoserine (serine 422). Phosphoserine occurs at positions 532, 614, and 624. Residues 616–625 are compositionally biased toward polar residues; it reads APSNRLNDSP. Threonine 626 bears the Phosphothreonine mark. Lysine 637 is covalently cross-linked (Glycyl lysine isopeptide (Lys-Gly) (interchain with G-Cter in SUMO2)). Phosphoserine occurs at positions 698, 708, 744, and 754. Lysine 776 is covalently cross-linked (Glycyl lysine isopeptide (Lys-Gly) (interchain with G-Cter in SUMO2)). Disordered regions lie at residues 964–995, 1036–1101, 1133–1233, 1264–1352, and 1393–1443; these read EEGNSILPERRGRPEISLDERGEGGHVHTSDD, EDYS…SDHW, LHKG…LGKT, QEKP…FSDQ, and LEKN…PGSA. The segment covering 971–994 has biased composition (basic and acidic residues); that stretch reads PERRGRPEISLDERGEGGHVHTSD. The segment covering 1045–1058 has biased composition (acidic residues); it reads SNDESDSEDTDSDD. The span at 1084 to 1095 shows a compositional bias: low complexity; the sequence is SPCSSRSSQSYR. Serine 1098 carries the post-translational modification Phosphoserine. A compositionally biased stretch (polar residues) spans 1162 to 1171; sequence HPQSDGVDST. The span at 1172-1191 shows a compositional bias: basic and acidic residues; sequence SHTDVKSDPLGHPNSEETVK. Positions 1215–1225 are enriched in polar residues; it reads KSWQQTTFQNR. Phosphoserine is present on serine 1228. Residues 1265–1276 are compositionally biased toward polar residues; the sequence is EKPSTTYQQPDS. Positions 1393–1403 are enriched in basic and acidic residues; the sequence is LEKNDIKDRGP. Serine 1413, serine 1415, and serine 1417 each carry phosphoserine. The interaction with TUBA1A stretch occupies residues 1418 to 1714; it reads DGELQDRKKV…KKERSRKKDS (297 aa). Residues 1421-1431 are compositionally biased toward basic and acidic residues; that stretch reads LQDRKKVRVEV. One can recognise an AWS domain in the interval 1494–1548; sequence IKRMQCECTPLSKDERAQGEIACGEDCLNRLLMIECSSRCPNGDYCSNRRFQRKQ. Zn(2+) is bound by residues cysteine 1499, cysteine 1501, cysteine 1516, cysteine 1520, cysteine 1529, cysteine 1533, and cysteine 1539. Residues 1550–1667 enclose the SET domain; the sequence is ADVEVILTEK…SGSELTFDYQ (118 aa). Residues 1560–1562, 1603–1605, and 1628–1629 contribute to the S-adenosyl-L-methionine site; these read KGW, HYY, and NH. Cysteine 1631 is a binding site for Zn(2+). The region spanning 1674–1690 is the Post-SET domain; that stretch reads EAQKCFCGSANCRGYLG. Glutamine 1676 contacts S-adenosyl-L-methionine. Position 1678 (cysteine 1678) interacts with Zn(2+). Phenylalanine 1679 lines the S-adenosyl-L-methionine pocket. Zn(2+) contacts are provided by cysteine 1680 and cysteine 1685. A phosphoserine mark is found at serine 1696, serine 1844, and serine 1845. The segment at 1831–1872 is disordered; the sequence is KTAVPPLSEGDGYSSENTSRAHTPLNTPDPSTKLSTEADTDT. The span at 1844–1867 shows a compositional bias: polar residues; it reads SSENTSRAHTPLNTPDPSTKLSTE. Phosphothreonine is present on residues threonine 1853 and threonine 1872. The residue at position 1888 (serine 1888) is a Phosphoserine. The segment at 1921 to 2142 is disordered; sequence EELQSQQLLP…EAQKQQQQMQ (222 aa). Low complexity predominate over residues 1924–1935; that stretch reads QSQQLLPQQLPE. Serine 1952 carries the post-translational modification Phosphoserine. Residues 1960–1972 are compositionally biased toward basic and acidic residues; the sequence is IEPKESNGTKLEE. The span at 1973 to 1990 shows a compositional bias: acidic residues; sequence PINEETPSQDEEEGVSDV. Phosphoserine is present on residues serine 1980, serine 1988, and serine 1995. Basic and acidic residues-rich tracts occupy residues 1991-2004, 2014-2046, and 2059-2072; these read ESERSQEQPDKTVD, DSWKDLKEVYRIPKKSQTEKENTTTERGRDAVG, and RSRERDPDKQTQNK. 2 positions are modified to phosphoserine: serine 2080 and serine 2082. Basic and acidic residues-rich tracts occupy residues 2090–2100 and 2111–2135; these read RGTKRPDDRYD and KDRNKLSTEERRKLFEQEVAQREAQ. Positions 2117-2146 form a coiled coil; that stretch reads STEERRKLFEQEVAQREAQKQQQQMQNLGM. The segment at 2137–2366 is low charge region; it reads QQQQMQNLGM…APGQPQPLQP (230 aa). One can recognise a WW domain in the interval 2389–2422; that stretch reads IVLPPNWKTARDPEGKIYYYHVITRQTQWDPPTW. A disordered region spans residues 2439 to 2465; it reads LGTPTYDENPMKASKKPKTAEADTSSE. The interval 2457–2564 is interaction with POLR2A; the sequence is TAEADTSSEL…YKPKEDTELE (108 aa).

This sequence belongs to the class V-like SAM-binding methyltransferase superfamily. Histone-lysine methyltransferase family. SET2 subfamily. Specifically interacts with hyperphosphorylated C-terminal domain (CTD) of RNA polymerase II large subunit (POLR2A): binds to CTD heptad repeats doubly phosphorylated on 'Ser-2' and 'Ser-5' of each heptad. Interacts with HTT. Interacts with IWS1. Interacts with p53/TP53; leading to regulate p53/TP53 target genes. Component of a complex with HNRNPL. Interacts with TUBA1A; the interaction is independent on alpha-tubulin acetylation on 'Lys-40'. Interacts with STAT1. May be automethylated. In terms of tissue distribution, ubiquitously expressed.

The protein resides in the nucleus. The protein localises to the chromosome. It carries out the reaction L-lysyl(36)-[histone H3] + 3 S-adenosyl-L-methionine = N(6),N(6),N(6)-trimethyl-L-lysyl(36)-[histone H3] + 3 S-adenosyl-L-homocysteine + 3 H(+). The catalysed reaction is L-lysyl-[protein] + S-adenosyl-L-methionine = N(6)-methyl-L-lysyl-[protein] + S-adenosyl-L-homocysteine + H(+). The enzyme catalyses L-lysyl-[protein] + 3 S-adenosyl-L-methionine = N(6),N(6),N(6)-trimethyl-L-lysyl-[protein] + 3 S-adenosyl-L-homocysteine + 3 H(+). With respect to regulation, specifically inhibited by sinefungin derivatives. N-propyl sinefungin (Pr-SNF) interacts preferentially with SETD2. In terms of biological role, histone methyltransferase that specifically trimethylates 'Lys-36' of histone H3 (H3K36me3) using dimethylated 'Lys-36' (H3K36me2) as substrate. It is capable of trimethylating unmethylated H3K36 (H3K36me0) in vitro. Represents the main enzyme generating H3K36me3, a specific tag for epigenetic transcriptional activation. Plays a role in chromatin structure modulation during elongation by coordinating recruitment of the FACT complex and by interacting with hyperphosphorylated POLR2A. Acts as a key regulator of DNA mismatch repair in G1 and early S phase by generating H3K36me3, a mark required to recruit MSH6 subunit of the MutS alpha complex: early recruitment of the MutS alpha complex to chromatin to be replicated allows a quick identification of mismatch DNA to initiate the mismatch repair reaction. Required for DNA double-strand break repair in response to DNA damage: acts by mediating formation of H3K36me3, promoting recruitment of RAD51 and DNA repair via homologous recombination (HR). Acts as a tumor suppressor. H3K36me3 also plays an essential role in the maintenance of a heterochromatic state, by recruiting DNA methyltransferase DNMT3A. H3K36me3 is also enhanced in intron-containing genes, suggesting that SETD2 recruitment is enhanced by splicing and that splicing is coupled to recruitment of elongating RNA polymerase. Required during angiogenesis. Required for endoderm development by promoting embryonic stem cell differentiation toward endoderm: acts by mediating formation of H3K36me3 in distal promoter regions of FGFR3, leading to regulate transcription initiation of FGFR3. In addition to histones, also mediates methylation of other proteins, such as tubulins and STAT1. Trimethylates 'Lys-40' of alpha-tubulins such as TUBA1B (alpha-TubK40me3); alpha-TubK40me3 is required for normal mitosis and cytokinesis and may be a specific tag in cytoskeletal remodeling. Involved in interferon-alpha-induced antiviral defense by mediating both monomethylation of STAT1 at 'Lys-525' and catalyzing H3K36me3 on promoters of some interferon-stimulated genes (ISGs) to activate gene transcription. Functionally, (Microbial infection) Recruited to the promoters of adenovirus 12 E1A gene in case of infection, possibly leading to regulate its expression. The chain is Histone-lysine N-methyltransferase SETD2 (SETD2) from Homo sapiens (Human).